Consider the following 244-residue polypeptide: Lytic polysaccharide monooxygenase-like protein ANIA_04702 (244 aa).

The N-terminal stretch at 1–23 (MLMSTSPSPWLAAAMLCIGLANA) is a signal peptide. Position 24 (histidine 24) interacts with Cu(2+). A Methylhistidine modification is found at histidine 24. Residues asparagine 57, asparagine 80, asparagine 118, asparagine 159, asparagine 192, and asparagine 198 are each glycosylated (N-linked (GlcNAc...) asparagine). 2 cysteine pairs are disulfide-bonded: cysteine 72/cysteine 177 and cysteine 142/cysteine 196. Asparagine 215 is lipidated: GPI-anchor amidated asparagine. A propeptide spans 216–244 (AGLEAVTVPSFLTAVVPTFLGIAYGLLMA) (removed in mature form).

The protein belongs to the X325 family. Cu(2+) serves as cofactor. Post-translationally, the catalytically essential N-terminal histidine His-24 is post-translationally modified by methylation to prevent protonation of the histidine side chain, and protect the critical active site of the enzyme from oxidative damage.

Its subcellular location is the cell membrane. In terms of biological role, lytic polysaccharide monooxygenase-like protein that has diverged to biological functions other than polysaccharide degradation since it does not perform oxidative cleavage of polysaccharides. Acts as a cell surface-bound protein that functions in the copper-accumulation pathway. May also act as the major cell wall sensor that regulates MAP kinase-dependent hyphal anastomosis, the fusion of hyphal cells. The sequence is that of Lytic polysaccharide monooxygenase-like protein ANIA_04702 from Emericella nidulans (strain FGSC A4 / ATCC 38163 / CBS 112.46 / NRRL 194 / M139) (Aspergillus nidulans).